A 145-amino-acid polypeptide reads, in one-letter code: MPGVTVKDVNQQEFVRALAAFLKKSGKLKVPEWVDTVKLAKHKELAPYDENWFYTRAASTARHLYLRGGAGVGSMTKIYGGRQRNGVMPSHFSRGSKSVARRVLQALEGLKMVEKDQDGGRKLTPQGQRDLDRIAGQVAAANKKH.

Lys23 is subject to N6-acetyllysine. At Arg67 the chain carries Omega-N-methylarginine. Lys111 and Lys115 each carry N6-acetyllysine. Lys143 carries the N6-succinyllysine modification.

Belongs to the eukaryotic ribosomal protein eS19 family. As to quaternary structure, component of the small ribosomal subunit. Part of the small subunit (SSU) processome, composed of more than 70 proteins and the RNA chaperone small nucleolar RNA (snoRNA) U3. Interacts with RPS19BP1; the interaction is direct and mediates the integration of RPS19 in state post-A1. Interacts with RPS19BP1.

Its subcellular location is the cytoplasm. It is found in the nucleus. The protein resides in the nucleolus. Functionally, component of the small ribosomal subunit. The ribosome is a large ribonucleoprotein complex responsible for the synthesis of proteins in the cell. Required for pre-rRNA processing and maturation of 40S ribosomal subunits. Part of the small subunit (SSU) processome, first precursor of the small eukaryotic ribosomal subunit. During the assembly of the SSU processome in the nucleolus, many ribosome biogenesis factors, an RNA chaperone and ribosomal proteins associate with the nascent pre-rRNA and work in concert to generate RNA folding, modifications, rearrangements and cleavage as well as targeted degradation of pre-ribosomal RNA by the RNA exosome. This is Small ribosomal subunit protein eS19 (RPS19) from Pongo abelii (Sumatran orangutan).